The primary structure comprises 607 residues: Elongation factor 4 (607 aa).

Residues 11–193 form the tr-type G domain; sequence SKIRNFSIIA…QIVEKVPAPT (183 aa). Residues 23–28 and 140–143 each bind GTP; these read DHGKST and NKID.

Belongs to the TRAFAC class translation factor GTPase superfamily. Classic translation factor GTPase family. LepA subfamily.

It localises to the cell membrane. It catalyses the reaction GTP + H2O = GDP + phosphate + H(+). Functionally, required for accurate and efficient protein synthesis under certain stress conditions. May act as a fidelity factor of the translation reaction, by catalyzing a one-codon backward translocation of tRNAs on improperly translocated ribosomes. Back-translocation proceeds from a post-translocation (POST) complex to a pre-translocation (PRE) complex, thus giving elongation factor G a second chance to translocate the tRNAs correctly. Binds to ribosomes in a GTP-dependent manner. This is Elongation factor 4 from Bacillus cereus (strain ATCC 10987 / NRS 248).